The following is a 182-amino-acid chain: NADH-quinone oxidoreductase subunit I (182 aa).

2 consecutive 4Fe-4S ferredoxin-type domains span residues 52–82 and 92–121; these read LTRD…LQKA and EFFR…LTPD. Positions 62, 65, 68, 72, 101, 104, 107, and 111 each coordinate [4Fe-4S] cluster.

Belongs to the complex I 23 kDa subunit family. NDH-1 is composed of 13 different subunits. Subunits NuoA, H, J, K, L, M, N constitute the membrane sector of the complex. The cofactor is [4Fe-4S] cluster.

Its subcellular location is the cell inner membrane. It carries out the reaction a quinone + NADH + 5 H(+)(in) = a quinol + NAD(+) + 4 H(+)(out). In terms of biological role, NDH-1 shuttles electrons from NADH, via FMN and iron-sulfur (Fe-S) centers, to quinones in the respiratory chain. The immediate electron acceptor for the enzyme in this species is believed to be ubiquinone. Couples the redox reaction to proton translocation (for every two electrons transferred, four hydrogen ions are translocated across the cytoplasmic membrane), and thus conserves the redox energy in a proton gradient. The polypeptide is NADH-quinone oxidoreductase subunit I (Pseudomonas aeruginosa (strain LESB58)).